A 749-amino-acid chain; its full sequence is Homeobox-leucine zipper protein ROC7 (749 aa).

The tract at residues 26 to 98 is disordered; it reads LDQHQQHQHQ…KKRYHRHTQH (73 aa). Residues 46-57 show a composition bias toward basic and acidic residues; it reads SDGRAPRDELEM. Over residues 68–79 the composition is skewed to gly residues; sequence SGGGGGGGGSGG. A compositionally biased stretch (basic residues) spans 86–97; it reads RPRKKRYHRHTQ. The homeobox DNA-binding region spans 88–147; that stretch reads RKKRYHRHTQHQIQELEAFFKECPHPDDKQRKELSRELGLEPLQVKFWFQNKRTQMKTQH. Residues 137–218 adopt a coiled-coil conformation; that stretch reads QNKRTQMKTQ…DRISAIAAKY (82 aa). The 239-residue stretch at 256–494 folds into the START domain; the sequence is ADFDKPLVIE…LERQCERLAS (239 aa).

This sequence belongs to the HD-ZIP homeobox family. Class IV subfamily.

The protein resides in the nucleus. Functionally, probable transcription factor. The sequence is that of Homeobox-leucine zipper protein ROC7 (ROC7) from Oryza sativa subsp. japonica (Rice).